We begin with the raw amino-acid sequence, 139 residues long: Spermatogenesis-associated protein 33 (139 aa).

Positions Met1 to Ser67 are interaction with ATG16L1. The tract at residues Met1–Val83 is disordered. The span at Lys25–Asp50 shows a compositional bias: basic and acidic residues. Residues Leu68 to Glu139 form an interaction with VDAC2 region. The PQIIIT signature appears at Pro86–Thr91. Ser94 bears the Phosphoserine mark. The segment covering Thr97–Gln109 has biased composition (polar residues). A disordered region spans residues Thr97 to Glu139. The span at Arg110 to Pro120 shows a compositional bias: basic and acidic residues.

Interacts (via PQIIIT motif) with PPP3R1, PPP3R2, PPP3CA, PPP3CB and PPP3CC. Interacts with VDAC2. Interacts with ATG16L1 (via WD repeats).

It is found in the cytoplasm. It localises to the cytosol. The protein resides in the nucleus. Its subcellular location is the mitochondrion. Its function is as follows. Plays an important role in sperm motility and male fertility. Required for sperm midpiece flexibility and for the localization of sperm calcineurin to the mitochondria. Promotes mitophagy as well as acts as an autophagy mediator in male germline cells. Links damaged mitochondria to autophagosomes via its binding to the outer mitochondrial membrane protein VDAC2, as well as to key autophagy machinery component ATG16L1. This is Spermatogenesis-associated protein 33 (SPATA33) from Homo sapiens (Human).